The primary structure comprises 242 residues: ATP-dependent dethiobiotin synthetase BioD (242 aa).

12–17 (EVGKTV) is an ATP binding site. A Mg(2+)-binding site is contributed by Thr16. Lys37 is an active-site residue. Residue Ser41 participates in substrate binding. ATP is bound by residues Asp51 and 112–115 (EGAG). Positions 51 and 112 each coordinate Mg(2+).

Belongs to the dethiobiotin synthetase family. In terms of assembly, homodimer. Mg(2+) serves as cofactor.

It is found in the cytoplasm. It carries out the reaction (7R,8S)-7,8-diammoniononanoate + CO2 + ATP = (4R,5S)-dethiobiotin + ADP + phosphate + 3 H(+). The protein operates within cofactor biosynthesis; biotin biosynthesis; biotin from 7,8-diaminononanoate: step 1/2. Its function is as follows. Catalyzes a mechanistically unusual reaction, the ATP-dependent insertion of CO2 between the N7 and N8 nitrogen atoms of 7,8-diaminopelargonic acid (DAPA, also called 7,8-diammoniononanoate) to form a ureido ring. This chain is ATP-dependent dethiobiotin synthetase BioD, found in Bacillus thuringiensis subsp. konkukian (strain 97-27).